The chain runs to 514 residues: MGSLDTNPTAFSAFPAGEGETFQPLNADDVRSYLHKAVDFISDYYKSVESMPVLPNVKPGYLQDELRASPPTYSAPFDVTMKELRSSVVPGMTHWASPNFFAFFPSTNSAAAIAGDLIASAMNTVGFTWQASPAATEMEVLALDWLAQMLNLPTSFMNRTGEGRGTGGGVILGTTSEAMLVTLVAARDAALRRSGSDGVAGLHRLAVYAADQTHSTFFKACRLAGFDPANIRSIPTGAETDYGLDPARLLEAMQADADAGLVPTYVCATVGTTSSNAVDPVGAVADVAARFAAWVHVDAAYAGSACICPEFRHHLDGVERVDSISMSPHKWLMTCLDCTCLYVRDTHRLTGSLETNPEYLKNHASDSGEVTDLKDMQVGVGRRFRGLKLWMVMRTYGVAKLQEHIRSDVAMAKVFEDLVRGDDRFEVVVPRNFALVCFRIRAGAGAAAATEEDADEANRELMERLNKTGKAYVAHTVVGGRFVLRFAVGSSLQEEHHVRSAWELIKKTTTEMMN.

Phenylalanine 104 is a serotonin binding site. Residues threonine 175 and serine 176 each contribute to the pyridoxal 5'-phosphate site. Histidine 214 serves as a coordination point for serotonin. A pyridoxal 5'-phosphate-binding site is contributed by threonine 273. The residue at position 330 (lysine 330) is an N6-(pyridoxal phosphate)lysine. The active-site Proton donor is the tyrosine 359. Residues valine 380 and glycine 381 each coordinate pyridoxal 5'-phosphate.

This sequence belongs to the group II decarboxylase family. As to quaternary structure, forms homodimers. Pyridoxal 5'-phosphate is required as a cofactor.

It carries out the reaction L-tryptophan + H(+) = tryptamine + CO2. The catalysed reaction is 5-hydroxy-L-tryptophan + H(+) = serotonin + CO2. Its function is as follows. Involved in serotonin biosynthesis. Catalyzes the decarboxylation of L-tryptophan to produce tryptamine, which is converted to serotonin by tryptamine 5-hydroxylase. May play a major role in serotonin biosynthesis during senescence. Accumulation of serotonin attenuates leaf senescence. Catalyzes the decarboxylation of 5-hydroxy-L-tryptophan to produce serotonin. This Oryza sativa subsp. japonica (Rice) protein is Tryptophan decarboxylase 1.